The sequence spans 181 residues: Inner membrane-spanning protein YciB (181 aa).

A run of 5 helical transmembrane segments spans residues 10–30, 50–70, 80–100, 118–138, and 148–168; these read LVIFFAVYKFFDIYIASGALI, MHLITFAMVSVFGSLTLILHD, IVYALFAIALAVSQFMNKPIL, VTWYWVLFFVVCGLVNIYVAF, and FKVFGLTALTLINTVLTVFYL.

This sequence belongs to the YciB family.

Its subcellular location is the cell inner membrane. Functionally, plays a role in cell envelope biogenesis, maintenance of cell envelope integrity and membrane homeostasis. This Shewanella piezotolerans (strain WP3 / JCM 13877) protein is Inner membrane-spanning protein YciB.